The sequence spans 500 residues: Cysteine--tRNA ligase (500 aa).

Residue Cys29 participates in Zn(2+) binding. Residues 31 to 41 (VTVYDLCHLGH) carry the 'HIGH' region motif. 3 residues coordinate Zn(2+): Cys213, His238, and Glu242. Positions 270 to 274 (KMSKS) match the 'KMSKS' region motif. Lys273 contacts ATP.

The protein belongs to the class-I aminoacyl-tRNA synthetase family. As to quaternary structure, monomer. Requires Zn(2+) as cofactor.

It localises to the cytoplasm. The enzyme catalyses tRNA(Cys) + L-cysteine + ATP = L-cysteinyl-tRNA(Cys) + AMP + diphosphate. This is Cysteine--tRNA ligase from Prochlorococcus marinus (strain NATL2A).